We begin with the raw amino-acid sequence, 496 residues long: NADH-ubiquinone oxidoreductase 51 kDa subunit, mitochondrial (496 aa).

Residues 1-30 (MISRAAAPSSSIASLSSRSLRAQAPAARSF) constitute a mitochondrion transit peptide. An NAD(+)-binding site is contributed by 98–107 (GRGGAGFPSG). 214 to 261 (GMGAYVCGEETSLIESIEGKAGKPRLKPPFPAAVGLFGCPSTVTNVET) provides a ligand contact to FMN. [4Fe-4S] cluster contacts are provided by cysteine 393, cysteine 396, cysteine 399, and cysteine 439.

Belongs to the complex I 51 kDa subunit family. In terms of assembly, complex I is composed of about 40 different subunits. This is a component of the flavoprotein-sulfur (FP) fragment of the enzyme. Requires FMN as cofactor. The cofactor is [4Fe-4S] cluster.

It is found in the mitochondrion inner membrane. It catalyses the reaction a ubiquinone + NADH + 5 H(+)(in) = a ubiquinol + NAD(+) + 4 H(+)(out). Core subunit of the mitochondrial membrane respiratory chain NADH dehydrogenase (Complex I) that is believed to belong to the minimal assembly required for catalysis. Complex I functions in the transfer of electrons from NADH to the respiratory chain. The immediate electron acceptor for the enzyme is believed to be ubiquinone. The sequence is that of NADH-ubiquinone oxidoreductase 51 kDa subunit, mitochondrial (NUO51) from Aspergillus niger.